Reading from the N-terminus, the 169-residue chain is Large ribosomal subunit protein uL15 (169 aa).

A compositionally biased stretch (basic and acidic residues) spans 1–13 (MKLNEIRDNEGAT). Positions 1-40 (MKLNEIRDNEGATKNRMRVGRGIGSGKGKTGGRGVKGQKA) are disordered. The segment covering 21–35 (RGIGSGKGKTGGRGV) has biased composition (gly residues).

It belongs to the universal ribosomal protein uL15 family. Part of the 50S ribosomal subunit.

Its function is as follows. Binds to the 23S rRNA. The protein is Large ribosomal subunit protein uL15 of Methylorubrum populi (strain ATCC BAA-705 / NCIMB 13946 / BJ001) (Methylobacterium populi).